We begin with the raw amino-acid sequence, 508 residues long: Tyrosine decarboxylase 4 (508 aa).

Lys318 carries the post-translational modification N6-(pyridoxal phosphate)lysine.

This sequence belongs to the group II decarboxylase family. Homodimer. It depends on pyridoxal 5'-phosphate as a cofactor.

It carries out the reaction L-tyrosine + H(+) = tyramine + CO2. The sequence is that of Tyrosine decarboxylase 4 (TYRDC-4) from Petroselinum crispum (Parsley).